The sequence spans 203 residues: Synaptosomal-associated protein 25-B (203 aa).

The segment covering 1–11 (MADEADMRNEL) has biased composition (basic and acidic residues). Residues 1–25 (MADEADMRNELTDMQARADQLGDES) form a disordered region. T-SNARE coiled-coil homology domains lie at 19–81 (DQLG…LTDL) and 137–199 (DARE…ATKM).

It belongs to the SNAP-25 family.

The protein resides in the synapse. Its subcellular location is the synaptosome. The protein localises to the cell membrane. In terms of biological role, may play an important role in the synaptic function of specific neuronal systems. Associates with proteins involved in vesicle docking and membrane fusion. The sequence is that of Synaptosomal-associated protein 25-B (snap25b) from Carassius auratus (Goldfish).